We begin with the raw amino-acid sequence, 469 residues long: 3-isopropylmalate dehydratase large subunit (469 aa).

[4Fe-4S] cluster is bound by residues C350, C410, and C413.

This sequence belongs to the aconitase/IPM isomerase family. LeuC type 1 subfamily. As to quaternary structure, heterodimer of LeuC and LeuD. The cofactor is [4Fe-4S] cluster.

It carries out the reaction (2R,3S)-3-isopropylmalate = (2S)-2-isopropylmalate. Its pathway is amino-acid biosynthesis; L-leucine biosynthesis; L-leucine from 3-methyl-2-oxobutanoate: step 2/4. Catalyzes the isomerization between 2-isopropylmalate and 3-isopropylmalate, via the formation of 2-isopropylmaleate. In Sinorhizobium medicae (strain WSM419) (Ensifer medicae), this protein is 3-isopropylmalate dehydratase large subunit.